The following is a 420-amino-acid chain: Glucose-1-phosphate adenylyltransferase 2 (420 aa).

Residues Y109, G175, 190–191 (EK), and S208 contribute to the alpha-D-glucose 1-phosphate site.

The protein belongs to the bacterial/plant glucose-1-phosphate adenylyltransferase family. Homotetramer.

It catalyses the reaction alpha-D-glucose 1-phosphate + ATP + H(+) = ADP-alpha-D-glucose + diphosphate. It participates in glycan biosynthesis; glycogen biosynthesis. Involved in the biosynthesis of ADP-glucose, a building block required for the elongation reactions to produce glycogen. Catalyzes the reaction between ATP and alpha-D-glucose 1-phosphate (G1P) to produce pyrophosphate and ADP-Glc. The protein is Glucose-1-phosphate adenylyltransferase 2 of Pseudoalteromonas atlantica (strain T6c / ATCC BAA-1087).